We begin with the raw amino-acid sequence, 655 residues long: FYVE, RhoGEF and PH domain-containing protein 2 (655 aa).

Phosphoserine is present on residues Ser10, Ser39, and Ser47. Disordered stretches follow at residues 21-52 and 84-103; these read NRTPGEAPGSHSLEDQPHSPEHQLSLSPEPWE and WRRSCQPGVSPGPETQEPEE. The span at 32–41 shows a compositional bias: basic and acidic residues; that stretch reads SLEDQPHSPE. The DH domain occupies 102–290; sequence EEKRVVRELL…FSAAQHSNAA (189 aa). The 100-residue stretch at 319–418 folds into the PH 1 domain; sequence TLLREGPVLK…WMQACQAAID (100 aa). Residues 458–518 form an FYVE-type zinc finger; it reads DKMVTMCMRC…VCLTCYTFLT (61 aa). Positions 464, 467, 481, 484, 489, 492, 510, and 513 each coordinate Zn(2+). Residues 544-641 enclose the PH 2 domain; it reads QSLVCSFLQL…WVTAIKRAAS (98 aa). Thr644 is modified (phosphothreonine). Ser654 bears the Phosphoserine mark.

As to expression, lymph node, spleen, B-lymphocytes and macrophages (at protein level). Expressed at high levels in lymph node, spleen, B-lymphocytes and bone marrow macrophages. Expressed at lower levels in mature bone marrow dendritic cells. In both immature and mature B-cells, expression is down-regulated by prior B-cell receptor signaling. Expression remains high in resting B and memory cells but declines upon differentiation into plasma cells.

The protein localises to the cytoplasm. The protein resides in the nucleus. It is found in the early endosome. Its subcellular location is the early endosome membrane. It localises to the cell projection. The protein localises to the ruffle membrane. The protein resides in the cytoskeleton. Activates CDC42, a member of the Ras-like family of Rho- and Rac proteins, by exchanging bound GDP for free GTP. Activates JNK1 via CDC42 but not RAC1. Binds to phosphatidylinositol 4,5-bisphosphate, phosphatidylinositol 3,4,5-trisphosphate, phosphatidylinositol 5-monophosphate, phosphatidylinositol 4-monophosphate and phosphatidylinositol 3-monophosphate. This is FYVE, RhoGEF and PH domain-containing protein 2 (Fgd2) from Mus musculus (Mouse).